An 85-amino-acid polypeptide reads, in one-letter code: Toxin Cll5c* (85 aa).

Residues 1 to 17 (MNSLLIITACLVLFVWA) form the signal peptide. Residues 18-83 (KEGYLVNKST…TYPLPNKSCS (66 aa)) enclose the LCN-type CS-alpha/beta domain. 4 disulfides stabilise this stretch: cysteine 29-cysteine 82, cysteine 33-cysteine 58, cysteine 42-cysteine 63, and cysteine 46-cysteine 65. Residues 84–85 (KK) constitute a propeptide, removed by a carboxypeptidase.

The protein belongs to the long (4 C-C) scorpion toxin superfamily. Sodium channel inhibitor family. Beta subfamily. Expressed by the venom gland.

The protein resides in the secreted. In terms of biological role, beta toxins bind voltage-independently at site-4 of sodium channels (Nav) and shift the voltage of activation toward more negative potentials thereby affecting sodium channel activation and promoting spontaneous and repetitive firing. This is Toxin Cll5c* from Centruroides limpidus (Mexican scorpion).